Consider the following 230-residue polypeptide: Enolase-phosphatase E1 (230 aa).

Belongs to the HAD-like hydrolase superfamily. MasA/MtnC family. In terms of assembly, monomer. The cofactor is Mg(2+).

The enzyme catalyses 5-methylsulfanyl-2,3-dioxopentyl phosphate + H2O = 1,2-dihydroxy-5-(methylsulfanyl)pent-1-en-3-one + phosphate. Its pathway is amino-acid biosynthesis; L-methionine biosynthesis via salvage pathway; L-methionine from S-methyl-5-thio-alpha-D-ribose 1-phosphate: step 3/6. It functions in the pathway amino-acid biosynthesis; L-methionine biosynthesis via salvage pathway; L-methionine from S-methyl-5-thio-alpha-D-ribose 1-phosphate: step 4/6. Functionally, bifunctional enzyme that catalyzes the enolization of 2,3-diketo-5-methylthiopentyl-1-phosphate (DK-MTP-1-P) into the intermediate 2-hydroxy-3-keto-5-methylthiopentenyl-1-phosphate (HK-MTPenyl-1-P), which is then dephosphorylated to form the acireductone 1,2-dihydroxy-3-keto-5-methylthiopentene (DHK-MTPene). This chain is Enolase-phosphatase E1, found in Marinobacter nauticus (strain ATCC 700491 / DSM 11845 / VT8) (Marinobacter aquaeolei).